The primary structure comprises 756 residues: Polyribonucleotide nucleotidyltransferase (756 aa).

Mg(2+) contacts are provided by aspartate 547 and aspartate 553. Residues 613–672 enclose the KH domain; sequence PRITSVTIPVNKIGELIGPKGKTINAITEETGADVSIEEDGTVYISAATGEAADAAIDRV. The S1 motif domain occupies 684-753; sequence GERFLGTVVK…NRGKISLVPV (70 aa).

This sequence belongs to the polyribonucleotide nucleotidyltransferase family. Requires Mg(2+) as cofactor.

It localises to the cytoplasm. The enzyme catalyses RNA(n+1) + phosphate = RNA(n) + a ribonucleoside 5'-diphosphate. In terms of biological role, involved in mRNA degradation. Catalyzes the phosphorolysis of single-stranded polyribonucleotides processively in the 3'- to 5'-direction. The chain is Polyribonucleotide nucleotidyltransferase from Corynebacterium aurimucosum (strain ATCC 700975 / DSM 44827 / CIP 107346 / CN-1) (Corynebacterium nigricans).